Reading from the N-terminus, the 676-residue chain is Methionine--tRNA ligase (676 aa).

The short motif at 15-25 is the 'HIGH' region element; the sequence is PYANGSIHLGH. Residues Cys-146, Cys-149, Cys-159, and Cys-162 each contribute to the Zn(2+) site. Positions 332 to 336 match the 'KMSKS' region motif; it reads KMSKS. Lys-335 contributes to the ATP binding site. A tRNA-binding domain is found at 574–676; that stretch reads DFAKVDMRIA…SGAQPGQQVK (103 aa).

The protein belongs to the class-I aminoacyl-tRNA synthetase family. MetG type 1 subfamily. As to quaternary structure, homodimer. Requires Zn(2+) as cofactor.

It localises to the cytoplasm. The catalysed reaction is tRNA(Met) + L-methionine + ATP = L-methionyl-tRNA(Met) + AMP + diphosphate. Is required not only for elongation of protein synthesis but also for the initiation of all mRNA translation through initiator tRNA(fMet) aminoacylation. The polypeptide is Methionine--tRNA ligase (Erwinia tasmaniensis (strain DSM 17950 / CFBP 7177 / CIP 109463 / NCPPB 4357 / Et1/99)).